The primary structure comprises 422 residues: Adenylosuccinate synthetase (422 aa).

GTP contacts are provided by residues G12–K18 and G40–T42. The Proton acceptor role is filled by D13. D13 and G40 together coordinate Mg(2+). IMP contacts are provided by residues D13–K16, N38–H41, T129, R143, N221, T236, and R300. Catalysis depends on H41, which acts as the Proton donor. Residue V296–R302 participates in substrate binding. GTP contacts are provided by residues R302, K328 to D330, and G410 to G412.

This sequence belongs to the adenylosuccinate synthetase family. As to quaternary structure, homodimer. Mg(2+) serves as cofactor.

It is found in the cytoplasm. The enzyme catalyses IMP + L-aspartate + GTP = N(6)-(1,2-dicarboxyethyl)-AMP + GDP + phosphate + 2 H(+). It participates in purine metabolism; AMP biosynthesis via de novo pathway; AMP from IMP: step 1/2. In terms of biological role, plays an important role in the de novo pathway and in the salvage pathway of purine nucleotide biosynthesis. Catalyzes the first committed step in the biosynthesis of AMP from IMP. The protein is Adenylosuccinate synthetase of Pyrenophora tritici-repentis (strain Pt-1C-BFP) (Wheat tan spot fungus).